We begin with the raw amino-acid sequence, 384 residues long: Aryl-alcohol dehydrogenase GME11368 (384 aa).

Residue Asp69 coordinates NADP(+). Tyr74 functions as the Proton donor in the catalytic mechanism. NADP(+) contacts are provided by residues 177-178 (SD), Gln203, and 301-309 (RKPEHLKAN).

It belongs to the aldo/keto reductase family. Aldo/keto reductase 2 subfamily.

It participates in secondary metabolite biosynthesis. Functionally, aryl-alcohol dehydrogenase; part of the gene cluster that mediates the biosynthesis of dibenzodioxocinones such as pestalotiollide B, a novel class of inhibitors against cholesterol ester transfer protein (CEPT). The biosynthesis initiates from condensation of acetate and malonate units catalyzed by the non-reducing PKS pks8/GME11356. Pks8/GME11356 lacks a thioesterase (TE) domain, which is important to the cyclizing of the third ring of atrochrysone carboxylic acid, and the esterase GME11355 might play the role of TE and catalyzes the cyclization reaction of the C ring. The lactamase-like protein GME11357 (or other beta-lactamases in Pestalotiopsis microspora) probably hydrolyzes the thioester bond between the ACP of pks8/GME11356 and the intermediate to release atrochrysone carboxylic acid, which is spontaneously dehydrates to form endocrocin anthrone. Endocrocin anthrone is further converted to emodin via the endocrocin intermediate. Emodin is then oxidized by several enzymes such as the Baeyer-Villiger oxidase GME11358, the oxidoreductase GME11367, the short chain dehydrogenase/reductase GME11373, as well as by other oxidoreductases from the cluster, to modify the A and C rings and open the B ring, and finally yield monodictyphenone. The prenyltransferase GME11375 may catalyze the addition reaction between the C5 side chains and the carbon bone of dibenzodioxocinones. The remaining biochemical reactions to the final product dibenzodioxocinones should be methylation catalyzed by methyltransferase GME11366 and reduction and lactonization reaction catalyzed by a series of oxidordeuctases. In Pestalotiopsis microspora, this protein is Aryl-alcohol dehydrogenase GME11368.